We begin with the raw amino-acid sequence, 273 residues long: 4-diphosphocytidyl-2-C-methyl-D-erythritol kinase (273 aa).

K9 is an active-site residue. 90–100 (PVAAGLGGGSA) serves as a coordination point for ATP. D129 is an active-site residue.

It belongs to the GHMP kinase family. IspE subfamily.

It carries out the reaction 4-CDP-2-C-methyl-D-erythritol + ATP = 4-CDP-2-C-methyl-D-erythritol 2-phosphate + ADP + H(+). It participates in isoprenoid biosynthesis; isopentenyl diphosphate biosynthesis via DXP pathway; isopentenyl diphosphate from 1-deoxy-D-xylulose 5-phosphate: step 3/6. Functionally, catalyzes the phosphorylation of the position 2 hydroxy group of 4-diphosphocytidyl-2C-methyl-D-erythritol. The sequence is that of 4-diphosphocytidyl-2-C-methyl-D-erythritol kinase from Erythrobacter litoralis (strain HTCC2594).